A 340-amino-acid chain; its full sequence is Ribosomal RNA large subunit methyltransferase F (340 aa).

The interval 1–36 (MNAPRTPKPARKKPDSATPAKPVEPRKEASLHPRNR) is disordered.

The protein belongs to the methyltransferase superfamily. METTL16/RlmF family.

Its subcellular location is the cytoplasm. The catalysed reaction is adenosine(1618) in 23S rRNA + S-adenosyl-L-methionine = N(6)-methyladenosine(1618) in 23S rRNA + S-adenosyl-L-homocysteine + H(+). In terms of biological role, specifically methylates the adenine in position 1618 of 23S rRNA. This Pseudomonas fluorescens (strain Pf0-1) protein is Ribosomal RNA large subunit methyltransferase F.